A 148-amino-acid chain; its full sequence is MPYRILFVCTGNTCRSPMAAALLENKQLPGVEVKSAGVFAAEGSEASVHAKMVLKEKGIEAAHRSSQLKKEHIDWATHVLAMTSGHKDMIVERFPEAKDKTFTLKQFVSGTDGDIADPFGGPIEVYRAARDELETLIDRLAEKLQTEQ.

The active-site Nucleophile is cysteine 9. 10-15 (TGNTCR) serves as a coordination point for substrate. Arginine 15 is an active-site residue. Residue aspartate 117 is the Proton donor of the active site.

It belongs to the low molecular weight phosphotyrosine protein phosphatase family. In terms of assembly, is present in solution as a mixture of monomers, dimers and higher order oligomers (trimers and tetramers).

The enzyme catalyses N(omega)-phospho-L-arginyl-[protein] + H2O = L-arginyl-[protein] + phosphate. Irreversibly inhibited by the synthetic inhibitor cyc-SeCN-amidine, which inactivates the enzyme by inducing disulfide bond formation between the two active site cysteine residues Cys-9 and Cys-14. Its function is as follows. Catalyzes the specific dephosphorylation of phosphoarginine residues in proteins. Probably counteracts the protein arginine kinase McsB in vivo. Exhibits almost no activity against pTyr peptides. Protein arginine phosphorylation has a physiologically important role and is involved in the regulation of many critical cellular processes, such as protein homeostasis, motility, competence, and stringent and stress responses, by regulating gene expression and protein activity. This chain is Protein-arginine-phosphatase (ywle), found in Geobacillus stearothermophilus (Bacillus stearothermophilus).